A 341-amino-acid chain; its full sequence is 4-hydroxy-2-oxovalerate aldolase 2 (341 aa).

Positions 8–260 (VTVHDMTLRD…ETGVDVAKIT (253 aa)) constitute a Pyruvate carboxyltransferase domain. 16-17 (RD) is a binding site for substrate. Aspartate 17 contacts Mn(2+). Histidine 20 functions as the Proton acceptor in the catalytic mechanism. Residues serine 170 and histidine 199 each coordinate substrate. Mn(2+) contacts are provided by histidine 199 and histidine 201. Substrate is bound at residue tyrosine 290.

It belongs to the 4-hydroxy-2-oxovalerate aldolase family.

The catalysed reaction is (S)-4-hydroxy-2-oxopentanoate = acetaldehyde + pyruvate. This chain is 4-hydroxy-2-oxovalerate aldolase 2, found in Dechloromonas aromatica (strain RCB).